A 256-amino-acid chain; its full sequence is Acetyl-coenzyme A carboxylase carboxyl transferase subunit alpha (256 aa).

The 236-residue stretch at 1–236 (MTDVARILKE…KSHLIDEITQ (236 aa)) folds into the CoA carboxyltransferase C-terminal domain.

The protein belongs to the AccA family. As to quaternary structure, acetyl-CoA carboxylase is a heterohexamer composed of biotin carboxyl carrier protein (AccB), biotin carboxylase (AccC) and two subunits each of ACCase subunit alpha (AccA) and ACCase subunit beta (AccD).

The protein localises to the cytoplasm. It catalyses the reaction N(6)-carboxybiotinyl-L-lysyl-[protein] + acetyl-CoA = N(6)-biotinyl-L-lysyl-[protein] + malonyl-CoA. Its pathway is lipid metabolism; malonyl-CoA biosynthesis; malonyl-CoA from acetyl-CoA: step 1/1. Component of the acetyl coenzyme A carboxylase (ACC) complex. First, biotin carboxylase catalyzes the carboxylation of biotin on its carrier protein (BCCP) and then the CO(2) group is transferred by the carboxyltransferase to acetyl-CoA to form malonyl-CoA. The protein is Acetyl-coenzyme A carboxylase carboxyl transferase subunit alpha of Streptococcus equi subsp. equi (strain 4047).